The primary structure comprises 429 residues: 3-phosphoshikimate 1-carboxyvinyltransferase (429 aa).

3-phosphoshikimate is bound by residues Lys23, Ser24, and Arg28. Lys23 is a phosphoenolpyruvate binding site. Residues Gly94 and Arg126 each coordinate phosphoenolpyruvate. Residues Ser171, Ser172, Gln173, Ser199, Asp316, Asn339, and Lys343 each coordinate 3-phosphoshikimate. Gln173 contributes to the phosphoenolpyruvate binding site. Asp316 serves as the catalytic Proton acceptor. Residues Arg347, Arg389, and Lys414 each contribute to the phosphoenolpyruvate site.

It belongs to the EPSP synthase family. Monomer.

It localises to the cytoplasm. The enzyme catalyses 3-phosphoshikimate + phosphoenolpyruvate = 5-O-(1-carboxyvinyl)-3-phosphoshikimate + phosphate. The protein operates within metabolic intermediate biosynthesis; chorismate biosynthesis; chorismate from D-erythrose 4-phosphate and phosphoenolpyruvate: step 6/7. Catalyzes the transfer of the enolpyruvyl moiety of phosphoenolpyruvate (PEP) to the 5-hydroxyl of shikimate-3-phosphate (S3P) to produce enolpyruvyl shikimate-3-phosphate and inorganic phosphate. The sequence is that of 3-phosphoshikimate 1-carboxyvinyltransferase from Idiomarina loihiensis (strain ATCC BAA-735 / DSM 15497 / L2-TR).